A 189-amino-acid polypeptide reads, in one-letter code: Thymidylate kinase (189 aa).

7–14 provides a ligand contact to ATP; that stretch reads GIDTAGKS.

It belongs to the thymidylate kinase family.

The enzyme catalyses dTMP + ATP = dTDP + ADP. In terms of biological role, phosphorylation of dTMP to form dTDP in both de novo and salvage pathways of dTTP synthesis. In Aliarcobacter butzleri (strain RM4018) (Arcobacter butzleri), this protein is Thymidylate kinase.